Here is a 128-residue protein sequence, read N- to C-terminus: Putative lipid-binding protein At4g00165 (128 aa).

The N-terminal stretch at 1–23 (MGISKALRSLLILLLLNITFFFG) is a signal peptide. Cystine bridges form between cysteine 34–cysteine 90, cysteine 46–cysteine 76, cysteine 56–cysteine 75, and cysteine 92–cysteine 128.

This sequence belongs to the plant LTP family. PEARLI1 subfamily.

Its subcellular location is the secreted. This chain is Putative lipid-binding protein At4g00165, found in Arabidopsis thaliana (Mouse-ear cress).